Consider the following 424-residue polypeptide: 3-isopropylmalate dehydratase large subunit 2 (424 aa).

Positions 299, 359, and 362 each coordinate [4Fe-4S] cluster.

The protein belongs to the aconitase/IPM isomerase family. LeuC type 2 subfamily. As to quaternary structure, heterodimer of LeuC and LeuD. [4Fe-4S] cluster is required as a cofactor.

It catalyses the reaction (2R,3S)-3-isopropylmalate = (2S)-2-isopropylmalate. Its pathway is amino-acid biosynthesis; L-leucine biosynthesis; L-leucine from 3-methyl-2-oxobutanoate: step 2/4. Its function is as follows. Catalyzes the isomerization between 2-isopropylmalate and 3-isopropylmalate, via the formation of 2-isopropylmaleate. The polypeptide is 3-isopropylmalate dehydratase large subunit 2 (Rubrobacter xylanophilus (strain DSM 9941 / JCM 11954 / NBRC 16129 / PRD-1)).